The chain runs to 298 residues: Succinate dehydrogenase [ubiquinone] iron-sulfur subunit, mitochondrial (298 aa).

Residues 59 to 147 form the 2Fe-2S ferredoxin-type domain; the sequence is YRFNPEAPGA…STKIYPLPHM (89 aa). 4 residues coordinate [2Fe-2S] cluster: C107, C112, C115, and C127. Positions 190-220 constitute a 4Fe-4S ferredoxin-type domain; it reads ERDRLDGLYECILCACCSTSCPSYWWNADKY. The [4Fe-4S] cluster site is built by C200, C203, and C206. C210 is a binding site for [3Fe-4S] cluster. An a ubiquinone-binding site is contributed by W215. 2 residues coordinate [3Fe-4S] cluster: C257 and C263. C267 contacts [4Fe-4S] cluster.

The protein belongs to the succinate dehydrogenase/fumarate reductase iron-sulfur protein family. As to quaternary structure, component of complex II composed of four subunits: a flavoprotein (FP), an iron-sulfur protein (IP), and a cytochrome b composed of a large and a small subunit. Requires [2Fe-2S] cluster as cofactor. [3Fe-4S] cluster serves as cofactor. It depends on [4Fe-4S] cluster as a cofactor.

The protein resides in the mitochondrion inner membrane. It catalyses the reaction a quinone + succinate = fumarate + a quinol. Its pathway is carbohydrate metabolism; tricarboxylic acid cycle; fumarate from succinate (eukaryal route): step 1/1. Functionally, iron-sulfur protein (IP) subunit of succinate dehydrogenase (SDH) that is involved in complex II of the mitochondrial electron transport chain and is responsible for transferring electrons from succinate to ubiquinone (coenzyme Q). The sequence is that of Succinate dehydrogenase [ubiquinone] iron-sulfur subunit, mitochondrial (sdhb-1) from Caenorhabditis elegans.